Here is a 185-residue protein sequence, read N- to C-terminus: Elongation factor P (185 aa).

This sequence belongs to the elongation factor P family.

It is found in the cytoplasm. It functions in the pathway protein biosynthesis; polypeptide chain elongation. Its function is as follows. Involved in peptide bond synthesis. Stimulates efficient translation and peptide-bond synthesis on native or reconstituted 70S ribosomes in vitro. Probably functions indirectly by altering the affinity of the ribosome for aminoacyl-tRNA, thus increasing their reactivity as acceptors for peptidyl transferase. This chain is Elongation factor P, found in Listeria innocua serovar 6a (strain ATCC BAA-680 / CLIP 11262).